The primary structure comprises 122 residues: ATP synthase epsilon chain (122 aa).

The segment covering 97–112 has biased composition (basic and acidic residues); it reads EDLKSERELTRSRGDA. The segment at 97–122 is disordered; sequence EDLKSERELTRSRGDAALRATRRLNS.

This sequence belongs to the ATPase epsilon chain family. As to quaternary structure, F-type ATPases have 2 components, CF(1) - the catalytic core - and CF(0) - the membrane proton channel. CF(1) has five subunits: alpha(3), beta(3), gamma(1), delta(1), epsilon(1). CF(0) has three main subunits: a, b and c.

The protein localises to the cell membrane. Functionally, produces ATP from ADP in the presence of a proton gradient across the membrane. This Corynebacterium aurimucosum (strain ATCC 700975 / DSM 44827 / CIP 107346 / CN-1) (Corynebacterium nigricans) protein is ATP synthase epsilon chain.